Here is a 139-residue protein sequence, read N- to C-terminus: MPLMPKRTKHRKMQKGQFAGLSKGANFVHFGEYGIQVLERGWITNQQIEACRVAINRFFQRRGKVWIRIFPDKPITKKPAEVRMGKGKGAVDHWVAVVRPGRILFEVANVPKDMAQSALRRAAAKLGLKTRFVERVEQV.

This sequence belongs to the universal ribosomal protein uL16 family. As to quaternary structure, part of the 50S ribosomal subunit.

Functionally, binds 23S rRNA and is also seen to make contacts with the A and possibly P site tRNAs. The sequence is that of Large ribosomal subunit protein uL16 from Protochlamydia amoebophila (strain UWE25).